The primary structure comprises 353 residues: Lipase ZK262.3 (353 aa).

An N-terminal signal peptide occupies residues 1–22; that stretch reads MPKNLRFSVFLLFLLCINSVFG. Residues asparagine 32 and asparagine 64 are each glycosylated (N-linked (GlcNAc...) asparagine). Residue serine 163 is the Nucleophile of the active site. Aspartate 221 serves as the catalytic Charge relay system. Asparagine 267 carries N-linked (GlcNAc...) asparagine glycosylation. Cysteine 277 and cysteine 288 are oxidised to a cystine. The Charge relay system role is filled by histidine 306.

Belongs to the AB hydrolase superfamily. Lipase family.

The protein localises to the secreted. Probable lipase. The protein is Lipase ZK262.3 of Caenorhabditis elegans.